Consider the following 25-residue polypeptide: Secapin-1 (25 aa).

A disulfide bond links Cys9 and Cys20.

As to expression, expressed by the venom gland.

Its subcellular location is the secreted. In terms of biological role, serine protease inhibitor which exhibits antifibrinolytic, antielastolytic and antimicrobial activities. Displays antimicrobial activity against bacteria and fungi. Likely functions in the innate immune response to microbial infection and possibly in the venom, as an antifibrinolytic agent. The protein is Secapin-1 of Apis mellifera (Honeybee).